The sequence spans 513 residues: Membrane-bound transcription factor site-2 protease homolog (513 aa).

The Cytoplasmic segment spans residues 1-60; sequence MEISGRRMRRFRMRFRRDHLTGGENIENEASCCYCDLKISNFNEPIFRLGRRFSGVLKVW. The helical transmembrane segment at 61 to 81 threads the bilayer; that stretch reads FSIGLGFGVASLILVTVFLLL. The Lumenal portion of the chain corresponds to 82-107; it reads QFHSNPLFSNRLTSAVFGFSPSTRVS. A helical membrane pass occupies residues 108 to 128; that stretch reads LSGIAYVLVSTVITVSVHELG. A Zn(2+)-binding site is contributed by histidine 125. Glutamate 126 is a catalytic residue. Residue histidine 129 coordinates Zn(2+). Residues 129–137 lie on the Cytoplasmic side of the membrane; it reads HALAAASEG. A helical membrane pass occupies residues 138-158; it reads IQMEYIAVFIAAIFPGGLVAF. Residues 159-182 lie on the Lumenal side of the membrane; it reads DNDVLQSLPSFNALRIYCAGIWHN. The chain crosses the membrane as a helical span at residues 183-203; that stretch reads AVFCALCVFALFLLPVMLSPF. Residues 204-437 are Cytoplasmic-facing; that stretch reads YKHGESLTVV…KSFPNILERS (234 aa). Residues 438 to 458 form a helical membrane-spanning segment; the sequence is LTCTFHVSLALVLLNSLPVYY. At 459–485 the chain is on the lumenal side; sequence LDGESILESSLQSFTWLSPRKKKKALQ. Residues 486–506 traverse the membrane as a helical segment; sequence VCLVGGSLLSFLAFFRIFLLG. The Cytoplasmic segment spans residues 507–513; it reads LPLSRRW.

The protein belongs to the peptidase M50A family. It depends on Zn(2+) as a cofactor. Expressed in the vasculature of roots, cotyledons and leaves.

It localises to the golgi apparatus membrane. Its function is as follows. Metalloprotease that catalyzes the second step (site-2 cleavage) in the proteolytic activation of various factors, after site-1 cleavage. Part of a regulated intramembrane proteolysis (RIP) cascade. After ER stress, cleaves BZIP17 and BZIP28 proteins which function as stress sensors and transducers in ER stress signaling pathway. The N-terminal bZIP component is translocated to the nucleus, where it activates the expression and production of ER chaperones, as well as proteins involved in brassinosteroid (BR) signaling, which is required for stress acclimation and growth. The polypeptide is Membrane-bound transcription factor site-2 protease homolog (S2P) (Arabidopsis thaliana (Mouse-ear cress)).